The following is a 513-amino-acid chain: Calcium-binding mitochondrial carrier protein SCaMC-2 (513 aa).

The Mitochondrial intermembrane segment spans residues 1–233 (MARPRSLVSP…EKQTGMWWRH (233 aa)). EF-hand domains follow at residues 55–90 (EHETRLQILFQELDVNKDGGICINDLAVGLKRLGVH), 91–124 (RTELELRKIVKAGDKDQDGQLDFEEFVHYLRDHE), 122–157 (DHEKKLRLVFKSLDKKNDGRIDAQEIMQSLRDLGVN), and 158–193 (ISEQQAEKILKSMDKNGTMTIDWNEWRDYHLLHPAE). 9 residues coordinate Ca(2+): aspartate 68, asparagine 70, aspartate 72, aspartate 79, aspartate 104, aspartate 106, aspartate 108, glutamine 110, and glutamate 115. Solcar repeat units follow at residues 228-314 (GMWW…MKRI), 322-407 (LGIH…LKNA), and 419-507 (PGVF…LKLT). Residues 234–251 (LVAGGGAGAVSRTCTAPL) form a helical membrane-spanning segment. Residues 252–288 (DRLKVLMQVHASRSNNMSMLGGFTQMIREGGIRSLWR) lie on the Mitochondrial matrix side of the membrane. Residues 289–308 (GNGINVIKIAPESAIKFMAY) form a helical membrane-spanning segment. Topologically, residues 309-331 (EQMKRIIGSDQETLGIHERLVAG) are mitochondrial intermembrane. A helical transmembrane segment spans residues 332-345 (SLAGVIAQSSIYPM). At 346-381 (EVLKTRMALRKTGQYQGMLDCGKKILLKEGVSAFYK) the chain is on the mitochondrial matrix side. A helical transmembrane segment spans residues 382–401 (GYVPNMLGIIPYAGIDLAVY). Topologically, residues 402-424 (ETLKNAWLQRYATSSADPGVFVL) are mitochondrial intermembrane. The helical transmembrane segment at 425–442 (LACGTISSTCGQLASYPL) threads the bilayer. Over 443–481 (ALVRTRMQAEASVEGAPQMTMSKLFKHIVKTEGAFGLYR) the chain is Mitochondrial matrix. The helical transmembrane segment at 482 to 501 (GLAPNFMKVIPAVSISYVVY) threads the bilayer. The Mitochondrial intermembrane segment spans residues 502–513 (ENLKLTLGVQSR).

The protein belongs to the mitochondrial carrier (TC 2.A.29) family.

It localises to the mitochondrion inner membrane. Functionally, calcium-dependent mitochondrial solute carrier. The chain is Calcium-binding mitochondrial carrier protein SCaMC-2 (slc25a25) from Xenopus tropicalis (Western clawed frog).